The primary structure comprises 276 residues: NH(3)-dependent NAD(+) synthetase (276 aa).

43–50 contacts ATP; that stretch reads GISGGVDS. D49 contributes to the Mg(2+) binding site. Deamido-NAD(+) is bound at residue R146. T166 is a binding site for ATP. Residue E171 coordinates Mg(2+). Deamido-NAD(+)-binding residues include K179 and D186. Residues K195 and T217 each contribute to the ATP site. Residue 266-267 coordinates deamido-NAD(+); it reads HK.

This sequence belongs to the NAD synthetase family. As to quaternary structure, homodimer.

It carries out the reaction deamido-NAD(+) + NH4(+) + ATP = AMP + diphosphate + NAD(+) + H(+). It participates in cofactor biosynthesis; NAD(+) biosynthesis; NAD(+) from deamido-NAD(+) (ammonia route): step 1/1. In terms of biological role, catalyzes the ATP-dependent amidation of deamido-NAD to form NAD. Uses ammonia as a nitrogen source. The polypeptide is NH(3)-dependent NAD(+) synthetase (Shewanella halifaxensis (strain HAW-EB4)).